The primary structure comprises 117 residues: MAEQISSAKAEARTVRIAPRKARLVVDLIRGKSVAEALAILQFTPRAASPIVEKVLKSAIANAEHNYDLESANLYVSEAYVNEGATLKRFRPRAKGMASPINKRTSHVVVVVSEKND.

Belongs to the universal ribosomal protein uL22 family. Part of the 50S ribosomal subunit.

Its function is as follows. This protein binds specifically to 23S rRNA; its binding is stimulated by other ribosomal proteins, e.g. L4, L17, and L20. It is important during the early stages of 50S assembly. It makes multiple contacts with different domains of the 23S rRNA in the assembled 50S subunit and ribosome. The globular domain of the protein is located near the polypeptide exit tunnel on the outside of the subunit, while an extended beta-hairpin is found that lines the wall of the exit tunnel in the center of the 70S ribosome. In Lactobacillus gasseri (strain ATCC 33323 / DSM 20243 / BCRC 14619 / CIP 102991 / JCM 1131 / KCTC 3163 / NCIMB 11718 / NCTC 13722 / AM63), this protein is Large ribosomal subunit protein uL22.